The following is a 529-amino-acid chain: Probable threonine/serine exporter (529 aa).

Helical transmembrane passes span 88 to 108, 168 to 188, 212 to 232, 234 to 254, 265 to 285, 312 to 332, 344 to 364, 365 to 385, 389 to 409, and 428 to 448; these read ITVT…PVTI, FALG…LAAV, VFGA…AGQD, TALV…VGSM, ALAR…GILI, MPLP…CLTI, AGLS…AGFG, RVVA…LISI, APAL…LAVF, and LLEA…GEFL. The interval 482–501 is disordered; that stretch reads QPAKSQQPTGTGGQRWRSVA.

It belongs to the ThrE exporter (TC 2.A.79) family.

The protein resides in the cell membrane. It catalyses the reaction L-threonine(in) + H(+)(out) = L-threonine(out) + H(+)(in). In terms of biological role, catalyzes the export of L-threonine and L-serine from the cell to the extracellular environment. Export is dependent on the proton motive force. Required for in vitro growth and survival of bacteria inside macrophages. Increased expression is associated with low-level amikacin (AMK) resistance. The protein is Probable threonine/serine exporter of Mycobacterium tuberculosis (strain ATCC 25618 / H37Rv).